The chain runs to 503 residues: Arabinose import ATP-binding protein AraG 1 (503 aa).

2 consecutive ABC transporter domains span residues 5–240 (LRFD…MVGR) and 253–497 (LGDV…LPQG). Residue 37–44 (GENGAGKS) participates in ATP binding.

This sequence belongs to the ABC transporter superfamily. Arabinose importer (TC 3.A.1.2.2) family. The complex is composed of two ATP-binding proteins (AraG), two transmembrane proteins (AraH) and a solute-binding protein (AraF).

The protein localises to the cell inner membrane. It carries out the reaction L-arabinose(out) + ATP + H2O = L-arabinose(in) + ADP + phosphate + H(+). Functionally, part of the ABC transporter complex AraFGH involved in arabinose import. Responsible for energy coupling to the transport system. This Burkholderia thailandensis (strain ATCC 700388 / DSM 13276 / CCUG 48851 / CIP 106301 / E264) protein is Arabinose import ATP-binding protein AraG 1.